The chain runs to 855 residues: MNENIDKDFSSHTPMMQQYLKLKAQHPEILLFYRMGDFYELFYDDAKRASQLLDISLTKRGASAGEPIPMAGIPYHAVENYLAKLVNQGESVAICEQIGDPATSKGPVERKVVRIVTPGTISDEALLQERQDNLLAAIWQDSKGFGYATLDISSGRFRLSEPADRETMAAELQRTNPAELLYAEDFAEMSLIEGRRGLRRRPLWEFEIDTARQQLNLQFGTRDLVGFGVENAPRGLCAAGCLLQYAKDTQRTTLPHIRSITMEREQDSIIMDAATRRNLEITQNLAGGAENTLASVLDCTVTPMGSRMLKRWLHMPVRDTRVLLERQQTIGALQDFTAELQPVLRQVGDLERILARLALRTARPRDLARMRHAFQQLPELRAQLETVDSAPVQALREKMGEFAELRDLLERAIIDTPPVLVRDGGVIASGYNEELDEWRALADGATDYLERLEVRERERTGLDTLKVGFNAVHGYYIQISRGQSHLAPINYMRRQTLKNAERYIIPELKEYEDKVLTSKGKALALEKQLYEELFDLLLPHLEALQQSASALAELDVLVNLAERAYTLNYTCPTFIDKPGIRITEGRHPVVEQVLNEPFIANPLNLSPQRRMLIITGPNMGGKSTYMRQTALIALMAYIGSYVPAQKVEIGPIDRIFTRVGAADDLASGRSTFMVEMTETANILHNATEYSLVLMDEIGRGTSTYDGLSLAWACAENLANKIKALTLFATHYFELTQLPEKMEGVANVHLDALEHGDTIAFMHSVQDGAASKSYGLAVAALAGVPKEVIKRARQKLRELESISPNAAATQVDGTQMSLLSVPEEISPAVEALENLDPDSLTPRQALEWIYRLKSLV.

616–623 (GPNMGGKS) lines the ATP pocket.

The protein belongs to the DNA mismatch repair MutS family.

Its function is as follows. This protein is involved in the repair of mismatches in DNA. It is possible that it carries out the mismatch recognition step. This protein has a weak ATPase activity. The chain is DNA mismatch repair protein MutS from Escherichia coli O139:H28 (strain E24377A / ETEC).